The sequence spans 84 residues: Mitochondrial import inner membrane translocase subunit Tim9 (84 aa).

The Twin CX3C motif signature appears at 28–52 (CFMDCVKDFTTREVKPEETTCSESC). Disulfide bonds link Cys28–Cys52 and Cys32–Cys48.

The protein belongs to the small Tim family. As to quaternary structure, heterohexamer; composed of 3 copies of TIMM9 and 3 copies of TIMM10/TIM10A, named soluble 70 kDa complex. The complex forms a 6-bladed alpha-propeller structure and associates with the TIMM22 component of the TIM22 complex. Interacts with multi-pass transmembrane proteins in transit.

It is found in the mitochondrion inner membrane. Mitochondrial intermembrane chaperone that participates in the import and insertion of multi-pass transmembrane proteins into the mitochondrial inner membrane. May also be required for the transfer of beta-barrel precursors from the TOM complex to the sorting and assembly machinery (SAM complex) of the outer membrane. Acts as a chaperone-like protein that protects the hydrophobic precursors from aggregation and guide them through the mitochondrial intermembrane space. The chain is Mitochondrial import inner membrane translocase subunit Tim9 (timm9) from Danio rerio (Zebrafish).